We begin with the raw amino-acid sequence, 479 residues long: DNA polymerase IV (479 aa).

Positions 7–189 constitute a UmuC domain; it reads ILHLDMDAFF…MTVRTLPGVG (183 aa). Mg(2+) contacts are provided by Asp-11 and Asp-105. The active site involves Glu-106. 2 disordered regions span residues 357 to 400 and 430 to 479; these read AGDR…GHGW and DPEL…TSRP. Residues 381–396 show a composition bias toward basic and acidic residues; sequence AERRWPSGHDVRHTEL.

This sequence belongs to the DNA polymerase type-Y family. As to quaternary structure, monomer. Requires Mg(2+) as cofactor.

It localises to the cytoplasm. The enzyme catalyses DNA(n) + a 2'-deoxyribonucleoside 5'-triphosphate = DNA(n+1) + diphosphate. In terms of biological role, poorly processive, error-prone DNA polymerase involved in untargeted mutagenesis. Copies undamaged DNA at stalled replication forks, which arise in vivo from mismatched or misaligned primer ends. These misaligned primers can be extended by PolIV. Exhibits no 3'-5' exonuclease (proofreading) activity. May be involved in translesional synthesis, in conjunction with the beta clamp from PolIII. The chain is DNA polymerase IV from Streptomyces coelicolor (strain ATCC BAA-471 / A3(2) / M145).